Here is a 333-residue protein sequence, read N- to C-terminus: Adenosine deaminase (333 aa).

Residues His12 and His14 each coordinate Zn(2+). Substrate-binding residues include His14, Asp16, and Gly170. Residue His197 coordinates Zn(2+). The active-site Proton donor is Glu200. Zn(2+) is bound at residue Asp278. Asp279 contributes to the substrate binding site.

It belongs to the metallo-dependent hydrolases superfamily. Adenosine and AMP deaminases family. Adenosine deaminase subfamily. The cofactor is Zn(2+).

It carries out the reaction adenosine + H2O + H(+) = inosine + NH4(+). The catalysed reaction is 2'-deoxyadenosine + H2O + H(+) = 2'-deoxyinosine + NH4(+). Catalyzes the hydrolytic deamination of adenosine and 2-deoxyadenosine. The chain is Adenosine deaminase from Klebsiella pneumoniae (strain 342).